We begin with the raw amino-acid sequence, 87 residues long: Large ribosomal subunit protein eL31 (87 aa).

Belongs to the eukaryotic ribosomal protein eL31 family.

This Methanoculleus marisnigri (strain ATCC 35101 / DSM 1498 / JR1) protein is Large ribosomal subunit protein eL31.